Reading from the N-terminus, the 2219-residue chain is RNA-directed RNA polymerase L (2219 aa).

The tract at residues 26–289 (KLAFLVQTEP…TTEDDVEYLI (264 aa)) is endonuclease. Glu-51, Asp-89, and Glu-102 together coordinate Mn(2+). Lys-115 is an active-site residue. The RdRp catalytic domain maps to 1177–1373 (LSMKLNVSLA…YMSDQLNKFV (197 aa)). Mg(2+) is bound at residue Asp-1335.

This sequence belongs to the Bunyavirales RNA polymerase family. As to quaternary structure, homomultimer; the oligomeric structure is essential for the polymerase activity. Interacts with nucleoprotein N. Interacts with protein Z; this interaction inhibits viral transcription and replication, Z partially blocks the product exit tunnel for the releasing nascent RNA product. Mn(2+) serves as cofactor. It depends on Mg(2+) as a cofactor.

It is found in the virion. Its subcellular location is the host cytoplasm. The catalysed reaction is RNA(n) + a ribonucleoside 5'-triphosphate = RNA(n+1) + diphosphate. Its function is as follows. RNA-dependent RNA polymerase, which is responsible for the replication and transcription of the viral RNA genome using antigenomic RNA as an intermediate. During transcription, synthesizes subgenomic RNAs and assures their capping by a cap-snatching mechanism, which involves the endonuclease activity cleaving the host capped pre-mRNAs. These short capped RNAs are then used as primers for viral transcription. The 3'-end of subgenomic mRNAs molecules are heterogeneous and not polyadenylated. The replicase function is to direct synthesis of antigenomic and genomic RNA which are encapsidated and non capped. As a consequence of the use of the same enzyme for both transcription and replication, these mechanisms need to be well coordinated. These processes may be regulated by proteins N and Z in a dose-dependent manner. Z protein inhibits the viral polymerase L und thus the viral transcription and RNA synthesis. In Homo sapiens (Human), this protein is RNA-directed RNA polymerase L.